Consider the following 391-residue polypeptide: Adaptive-response sensory kinase SasA (391 aa).

One can recognise a Histidine kinase domain in the interval 169–391 (MLAHDLRSPL…CFHFTLPVCR (223 aa)). A Phosphohistidine; by autocatalysis modification is found at His172.

In terms of assembly, homooligomerizes. Interacts with KaiC. Participates in the KaiABC clock complex, whose core is composed of a KaiC homohexamer, 6 KaiB and up to 6 KaiA dimers. SasA and KaiB(fs) compete to bind to KaiC.

It catalyses the reaction ATP + protein L-histidine = ADP + protein N-phospho-L-histidine.. In terms of biological role, member of the two-component regulatory system SasA/RpaA involved in genome-wide circadian gene expression. One of several clock output pathways. Participates in the Kai clock protein complex, the main circadian regulator in cyanobacteria, via its interaction with KaiC. KaiC enhances the autophosphorylation activity of SasA, which then transfers its phosphate group to RpaA to activate it. In addition to its output function, recruits fold-shifted KaiB (KaiB(fs)) to KaiC to cooperatively form the KaiB(6):KaiC(6) complex (independent of SasA kinase activity). Required for robustness of the circadian rhythm of gene expression and is involved in clock output, also required for adaptation to light/dark cycles. The chain is Adaptive-response sensory kinase SasA from Rippkaea orientalis (strain PCC 8801 / RF-1) (Cyanothece sp. (strain PCC 8801)).